The chain runs to 243 residues: 4-hydroxy-tetrahydrodipicolinate reductase (243 aa).

Residues 9-14 (GANGKM), 78-80 (GTS), and 104-107 (APNF) contribute to the NAD(+) site. Catalysis depends on histidine 134, which acts as the Proton donor/acceptor. Histidine 135 contacts (S)-2,3,4,5-tetrahydrodipicolinate. The active-site Proton donor is the lysine 138. Position 144 to 145 (144 to 145 (GT)) interacts with (S)-2,3,4,5-tetrahydrodipicolinate.

This sequence belongs to the DapB family.

It localises to the cytoplasm. The catalysed reaction is (S)-2,3,4,5-tetrahydrodipicolinate + NAD(+) + H2O = (2S,4S)-4-hydroxy-2,3,4,5-tetrahydrodipicolinate + NADH + H(+). The enzyme catalyses (S)-2,3,4,5-tetrahydrodipicolinate + NADP(+) + H2O = (2S,4S)-4-hydroxy-2,3,4,5-tetrahydrodipicolinate + NADPH + H(+). The protein operates within amino-acid biosynthesis; L-lysine biosynthesis via DAP pathway; (S)-tetrahydrodipicolinate from L-aspartate: step 4/4. Its function is as follows. Catalyzes the conversion of 4-hydroxy-tetrahydrodipicolinate (HTPA) to tetrahydrodipicolinate. The chain is 4-hydroxy-tetrahydrodipicolinate reductase from Legionella pneumophila (strain Lens).